The following is a 245-amino-acid chain: Octopine transport system permease protein OccM (245 aa).

5 consecutive transmembrane segments (helical) span residues 12 to 32 (FVAL…SVAL), 57 to 77 (FYIF…IYYG), 96 to 116 (AYWC…AEIM), 163 to 183 (ILMV…ITGI), and 204 to 224 (IYLI…WALW). The ABC transmembrane type-1 domain occupies 19 to 216 (IPLALQLAVF…ILNFIVARLF (198 aa)).

Belongs to the binding-protein-dependent transport system permease family. HisMQ subfamily.

The protein localises to the cell inner membrane. Its function is as follows. Component of the octopine active transport system probably consisting of four subunits: Q, M, P and T. This chain is Octopine transport system permease protein OccM (occM), found in Rhizobium radiobacter (Agrobacterium tumefaciens).